We begin with the raw amino-acid sequence, 189 residues long: Adenylate kinase (189 aa).

11-16 serves as a coordination point for ATP; sequence GSGKGT. The NMP stretch occupies residues 31–60; it reads STGDVLRAEIKNGTELGKTAKGYIDQGQLI. AMP is bound by residues Thr-32, Arg-37, 58–60, 86–89, and Gln-93; these read QLI and GFPR. The LID stretch occupies residues 127–137; the sequence is KRGKDSGRADD. Arg-128 contributes to the ATP binding site. 2 residues coordinate AMP: Arg-134 and Arg-145. Gly-173 serves as a coordination point for ATP.

Belongs to the adenylate kinase family. Monomer.

It localises to the cytoplasm. It catalyses the reaction AMP + ATP = 2 ADP. The protein operates within purine metabolism; AMP biosynthesis via salvage pathway; AMP from ADP: step 1/1. Functionally, catalyzes the reversible transfer of the terminal phosphate group between ATP and AMP. Plays an important role in cellular energy homeostasis and in adenine nucleotide metabolism. This Bacteroides thetaiotaomicron (strain ATCC 29148 / DSM 2079 / JCM 5827 / CCUG 10774 / NCTC 10582 / VPI-5482 / E50) protein is Adenylate kinase.